The sequence spans 234 residues: Phosphoribosylaminoimidazole-succinocarboxamide synthase (234 aa).

This sequence belongs to the SAICAR synthetase family.

The catalysed reaction is 5-amino-1-(5-phospho-D-ribosyl)imidazole-4-carboxylate + L-aspartate + ATP = (2S)-2-[5-amino-1-(5-phospho-beta-D-ribosyl)imidazole-4-carboxamido]succinate + ADP + phosphate + 2 H(+). It participates in purine metabolism; IMP biosynthesis via de novo pathway; 5-amino-1-(5-phospho-D-ribosyl)imidazole-4-carboxamide from 5-amino-1-(5-phospho-D-ribosyl)imidazole-4-carboxylate: step 1/2. The protein is Phosphoribosylaminoimidazole-succinocarboxamide synthase of Streptococcus pyogenes serotype M1.